The primary structure comprises 117 residues: Ribosome maturation factor RimP (117 aa).

It belongs to the RimP family.

The protein resides in the cytoplasm. Functionally, required for maturation of 30S ribosomal subunits. The sequence is that of Ribosome maturation factor RimP from Rickettsia prowazekii (strain Madrid E).